We begin with the raw amino-acid sequence, 432 residues long: Pachytene checkpoint protein 2 homolog (432 aa).

The residue at position 1 (methionine 1) is an N-acetylmethionine. Residue glycine 179–threonine 186 participates in ATP binding.

This sequence belongs to the AAA ATPase family. PCH2 subfamily. In terms of assembly, specifically interacts with the ligand binding domain of the thyroid receptor (TR). This interaction does not require the presence of thyroid hormone for its interaction. Interacts with HPV16 E1. Interacts with proteasome subunit PSMA8; to participate in meiosis progression during spermatogenesis.

Plays a key role in chromosome recombination and chromosome structure development during meiosis. Required at early steps in meiotic recombination that leads to non-crossovers pathways. Also needed for efficient completion of homologous synapsis by influencing crossover distribution along the chromosomes affecting both crossovers and non-crossovers pathways. Also required for development of higher-order chromosome structures and is needed for synaptonemal-complex formation. In males, required for efficient synapsis of the sex chromosomes and for sex body formation. Promotes early steps of the DNA double-strand breaks (DSBs) repair process upstream of the assembly of RAD51 complexes. Required for depletion of HORMAD1 and HORMAD2 from synapsed chromosomes. Plays a role in mitotic spindle assembly checkpoint (SAC) activation. The polypeptide is Pachytene checkpoint protein 2 homolog (TRIP13) (Homo sapiens (Human)).